We begin with the raw amino-acid sequence, 197 residues long: NADH-quinone oxidoreductase subunit C (197 aa).

It belongs to the complex I 30 kDa subunit family. NDH-1 is composed of 14 different subunits. Subunits NuoB, C, D, E, F, and G constitute the peripheral sector of the complex.

It is found in the cell inner membrane. The catalysed reaction is a quinone + NADH + 5 H(+)(in) = a quinol + NAD(+) + 4 H(+)(out). NDH-1 shuttles electrons from NADH, via FMN and iron-sulfur (Fe-S) centers, to quinones in the respiratory chain. The immediate electron acceptor for the enzyme in this species is believed to be ubiquinone. Couples the redox reaction to proton translocation (for every two electrons transferred, four hydrogen ions are translocated across the cytoplasmic membrane), and thus conserves the redox energy in a proton gradient. This chain is NADH-quinone oxidoreductase subunit C, found in Neisseria meningitidis serogroup C (strain 053442).